The chain runs to 1400 residues: Macrophage-stimulating protein receptor (1400 aa).

Positions 1-24 (MELLPPLPQSFLLLLLLPAKPAAG) are cleaved as a signal peptide. Residues 25 to 957 (EDWQCPRTPY…PGPDGVPQST (933 aa)) are Extracellular-facing. One can recognise a Sema domain in the interval 31–522 (RTPYAASRDF…SGDQVFQVPI (492 aa)). An N-linked (GlcNAc...) asparagine glycan is attached at N66. Intrachain disulfides connect C101/C104, C107/C162, C135/C143, C174/C177, C300/C367, C385/C407, and C386/C422. N-linked (GlcNAc...) asparagine glycans are attached at residues N419, N458, and N488. Disulfide bonds link C527–C545, C533–C567, C536–C552, and C548–C558. 3 consecutive IPT/TIG domains span residues 569-671 (PKLT…FRVD), 684-767 (PVLI…FQYR), and 770-860 (PVVL…FRFL). N-linked (GlcNAc...) asparagine glycosylation is found at N654, N720, N841, and N897. A helical membrane pass occupies residues 958–978 (LLGILLPLLLLVAALATALVF). Residues 979 to 1400 (SYWWRRKQLV…RPLSEPPRPT (422 aa)) are Cytoplasmic-facing. In terms of domain architecture, Protein kinase spans 1082–1345 (THSDRVIGKG…VLVGEVEQIV (264 aa)). Residues 1088 to 1096 (IGKGHFGVV), K1114, and 1161 to 1164 (LPYM) each bind ATP. D1208 functions as the Proton acceptor in the catalytic mechanism. R1212 is an ATP binding site. Phosphotyrosine; by autocatalysis is present on residues Y1238, Y1239, Y1353, and Y1360. The interval 1367-1400 (TSHEMNVRPEQPQFSPMPGNVRRPRPLSEPPRPT) is disordered.

Belongs to the protein kinase superfamily. Tyr protein kinase family. As to quaternary structure, heterodimer of an alpha chain and a beta chain which are disulfide linked. Binds PLXNB1. Associates with and is negatively regulated by HYAL2. Interacts when phosphorylated with downstream effectors including PIK3R1, PCLG1, GRB2 and GAB1. Interacts with integrin beta1/ITGB1 in a ligand-independent fashion. Proteolytic processing yields the two subunits. Post-translationally, autophosphorylated in response to ligand binding on Tyr-1238 and Tyr-1239 in the kinase domain leading to further phosphorylation of Tyr-1353 and Tyr-1360 in the C-terminal multifunctional docking site. In terms of processing, ubiquitinated. Ubiquitination by CBL regulates the receptor stability and activity through proteasomal degradation. O-mannosylation of IPT/TIG domains on Thr or Ser residues by TMEM260 is required for protein maturation. O-mannosylated residues are composed of single mannose glycans that are not elongated or modified. As to expression, expressed in colon, skin, lung and bone marrow.

The protein localises to the membrane. The catalysed reaction is L-tyrosyl-[protein] + ATP = O-phospho-L-tyrosyl-[protein] + ADP + H(+). Its activity is regulated as follows. In its inactive state, the C-terminal tail interacts with the catalytic domain and inhibits the kinase activity. Upon ligand binding, the C-terminal tail is displaced and becomes phosphorylated, thus increasing the kinase activity. In terms of biological role, receptor tyrosine kinase that transduces signals from the extracellular matrix into the cytoplasm by binding to MST1 ligand. Regulates many physiological processes including cell survival, migration and differentiation. Ligand binding at the cell surface induces autophosphorylation of RON on its intracellular domain that provides docking sites for downstream signaling molecules. Following activation by ligand, interacts with the PI3-kinase subunit PIK3R1, PLCG1 or the adapter GAB1. Recruitment of these downstream effectors by RON leads to the activation of several signaling cascades including the RAS-ERK, PI3 kinase-AKT, or PLCgamma-PKC. RON signaling activates the wound healing response by promoting epithelial cell migration, proliferation as well as survival at the wound site. Also plays a role in the innate immune response by regulating the migration and phagocytic activity of macrophages. Alternatively, RON can also promote signals such as cell migration and proliferation in response to growth factors other than MST1 ligand. The protein is Macrophage-stimulating protein receptor (MST1R) of Homo sapiens (Human).